The chain runs to 260 residues: Malonyl-[acyl-carrier protein] O-methyltransferase (260 aa).

It belongs to the methyltransferase superfamily.

It carries out the reaction malonyl-[ACP] + S-adenosyl-L-methionine = malonyl-[ACP] methyl ester + S-adenosyl-L-homocysteine. The protein operates within cofactor biosynthesis; biotin biosynthesis. In terms of biological role, converts the free carboxyl group of a malonyl-thioester to its methyl ester by transfer of a methyl group from S-adenosyl-L-methionine (SAM). It allows to synthesize pimeloyl-ACP via the fatty acid synthetic pathway. The protein is Malonyl-[acyl-carrier protein] O-methyltransferase of Herminiimonas arsenicoxydans.